The sequence spans 631 residues: 1-deoxy-D-xylulose-5-phosphate synthase (631 aa).

A disordered region spans residues 1–21 (MPTTFHEIPRERPLTPLLDSA). Thiamine diphosphate-binding positions include H87 and 128 to 130 (GHS). D159 provides a ligand contact to Mg(2+). Residues 160-161 (GA), N188, F295, and E377 contribute to the thiamine diphosphate site. N188 contributes to the Mg(2+) binding site.

It belongs to the transketolase family. DXPS subfamily. In terms of assembly, homodimer. Mg(2+) serves as cofactor. Requires thiamine diphosphate as cofactor.

It catalyses the reaction D-glyceraldehyde 3-phosphate + pyruvate + H(+) = 1-deoxy-D-xylulose 5-phosphate + CO2. It functions in the pathway metabolic intermediate biosynthesis; 1-deoxy-D-xylulose 5-phosphate biosynthesis; 1-deoxy-D-xylulose 5-phosphate from D-glyceraldehyde 3-phosphate and pyruvate: step 1/1. Catalyzes the acyloin condensation reaction between C atoms 2 and 3 of pyruvate and glyceraldehyde 3-phosphate to yield 1-deoxy-D-xylulose-5-phosphate (DXP). This Ectopseudomonas mendocina (strain ymp) (Pseudomonas mendocina) protein is 1-deoxy-D-xylulose-5-phosphate synthase.